The sequence spans 288 residues: Acetyl-coenzyme A carboxylase carboxyl transferase subunit beta (288 aa).

The 255-residue stretch at 34–288 folds into the CoA carboxyltransferase N-terminal domain; the sequence is LFAKCPACKH…HLVAFHGGGQ (255 aa). Residues Cys38, Cys41, Cys56, and Cys59 each coordinate Zn(2+). The segment at 38-59 adopts a C4-type zinc-finger fold; the sequence is CPACKHMIYKKDLGLAKICPTC.

This sequence belongs to the AccD/PCCB family. In terms of assembly, acetyl-CoA carboxylase is a heterohexamer composed of biotin carboxyl carrier protein (AccB), biotin carboxylase (AccC) and two subunits each of ACCase subunit alpha (AccA) and ACCase subunit beta (AccD). The cofactor is Zn(2+).

It is found in the cytoplasm. The enzyme catalyses N(6)-carboxybiotinyl-L-lysyl-[protein] + acetyl-CoA = N(6)-biotinyl-L-lysyl-[protein] + malonyl-CoA. The protein operates within lipid metabolism; malonyl-CoA biosynthesis; malonyl-CoA from acetyl-CoA: step 1/1. Functionally, component of the acetyl coenzyme A carboxylase (ACC) complex. Biotin carboxylase (BC) catalyzes the carboxylation of biotin on its carrier protein (BCCP) and then the CO(2) group is transferred by the transcarboxylase to acetyl-CoA to form malonyl-CoA. This is Acetyl-coenzyme A carboxylase carboxyl transferase subunit beta from Streptococcus dysgalactiae subsp. equisimilis (strain GGS_124).